The sequence spans 142 residues: uncharacterized protein (142 aa).

Positions 1–26 are cleaved as a signal peptide; that stretch reads MITEFIKSFLLFFFLPFFLSMPMIFA.

This is an uncharacterized protein from Schizosaccharomyces pombe (strain 972 / ATCC 24843) (Fission yeast).